A 281-amino-acid polypeptide reads, in one-letter code: MQVETLELQSEKNRKRLVEIVYKAKAGHIGGDLSCLNVLTALYFDIMRVWPDKPKETKRDRFVMSKGHCVEALYVTLEAKGFISREVTDTLGEFGSILSGHPTIEVPGIEVNTGALGHGLSVGVGMAMAAKMDKADYKTYVLMGDGEQGEGSIYEAAMAGNQYKLDNLVAIIDRNRLQISGTTEEVMSLESMRDRWTAFGWDVLEMNGDEMEDIIRTFRSIDYTNKKPHLLISHTTKGKGVSYMEGIAKWHHGVPTAEQYEEAVREVSERIEKLEKENNGK.

The protein belongs to the transketolase family. As to quaternary structure, probable heterodimer composed of AptA and AptB. Requires thiamine diphosphate as cofactor.

It carries out the reaction apulose 4-phosphate + D-glyceraldehyde 3-phosphate = D-xylulose 5-phosphate + dihydroxyacetone phosphate. It participates in carbohydrate metabolism. Functionally, involved in catabolism of D-apiose. Catalyzes the transfer of the glycolaldehyde group from apulose-4-phosphate to D-glyceraldehyde 3-phosphate, generating dihydroxyacetone phosphate and D-xylulose-5-phosphate. The chain is Apulose-4-phosphate transketolase subunit A from Phocaeicola vulgatus (strain ATCC 8482 / DSM 1447 / JCM 5826 / CCUG 4940 / NBRC 14291 / NCTC 11154) (Bacteroides vulgatus).